Consider the following 491-residue polypeptide: Probable ribonuclease FAU-1 (491 aa).

The protein belongs to the FAU-1 family.

In terms of biological role, probable RNase involved in rRNA stability through maturation and/or degradation of precursor rRNAs. Binds to RNA in loop regions with AU-rich sequences. This chain is Probable ribonuclease FAU-1, found in Thermofilum pendens (strain DSM 2475 / Hrk 5).